The primary structure comprises 1214 residues: Protein argonaute-2 (1214 aa).

The interval 1–412 (MGKKDKNKKG…GSIKRGTIGK (412 aa)) is disordered. Composition is skewed to low complexity over residues 18–93 (PQPQ…QQKS) and 107–117 (KQQVQGWTKQG). 7 stretches are compositionally biased toward gly residues: residues 118–131 (QQGGHQQGRQGQDG), 141–154 (QQGGHQQGRQGQEG), 164–177 (QQGGHQQGRQGQEG), 187–200 (QQGGHQQGRQGQEG), 210–223 (QQGGHQQGRQGQEG), 233–246 (QQGGHQQGRQGQEG), and 256–269 (QQGGHQQGRQGQEG). Residues 270-282 (GYQQRPPGQQQGG) show a composition bias toward low complexity. Gly residues-rich tracts occupy residues 302–315 (QQGGHQQGRQGQEG), 325–338 (QQGGHQQGRQGQEG), and 348–361 (QQGGHQQGRQGQEG). Low complexity predominate over residues 362 to 394 (GYQQRPPGQQPNQTQSQGQYQSRGPPQQQQAAP). A PAZ domain is found at 608–717 (LERFSLKAKI…LPIELCSIEE (110 aa)). An interaction with guide RNA region spans residues 681–686 (YFHSRN). Positions 885–1186 (LAIVIIPQFR…ARGRVYLTGT (302 aa)) constitute a Piwi domain. Positions 965 and 1037 each coordinate a divalent metal cation. 3 interaction with guide RNA regions span residues 1075 to 1076 (KR), 1119 to 1127 (HQAIQGTAK), and 1156 to 1178 (FPRCNRSVSYPAPAYLAHLVAAR). Residue histidine 1173 participates in a divalent metal cation binding.

This sequence belongs to the argonaute family. Ago subfamily. As to quaternary structure, interacts with Fmr1, Dcr-1 and vig to form the RNA-induced silencing complex (RISC), a ribonucleoprotein (RNP) complex involved in translation regulation, other components of the complex are RpL5, RpL11 and Rm62. As part of the RISC complex, interacts with Tudor-SN. Interacts with Taf11. In terms of assembly, (Microbial infection) Interacts with cricket paralysis virus protein 1A; this interaction may block the RISC activity. Requires Mg(2+) as cofactor. The cofactor is Mn(2+).

It localises to the nucleus. Its subcellular location is the cytoplasm. The protein localises to the cytoplasmic ribonucleoprotein granule. Essential for RNA interference (RNAi); double-stranded RNA induces potent and specific gene silencing. RNAi is mediated by the RNA-induced silencing complex (RISC), a sequence-specific, multicomponent nuclease that destroys or silences messenger RNAs homologous to the silencing trigger. The chain is Protein argonaute-2 from Drosophila melanogaster (Fruit fly).